A 245-amino-acid chain; its full sequence is Derlin-1 (245 aa).

The Cytoplasmic portion of the chain corresponds to 1–17 (MDAGVWYRSLPRFTRYW). A helical transmembrane segment spans residues 18–38 (LTATVVLSMLCRFDVIPLHWL). The Lumenal portion of the chain corresponds to 39–58 (HLDRSAVFSKLQLWRCMTSL). The chain crosses the membrane as a helical span at residues 59–79 (FVFPISSNTAFHFLINCFFIV). Topologically, residues 80–99 (QYSSKLEKDQYSRSPADYLY) are cytoplasmic. Residues 100–120 (LLIVSAVLANIGGMIFNVYFL) traverse the membrane as a helical segment. Residues 121–156 (MDTLVLAITYIWCQLNKDVTVSFWFGTRFKAMYLPW) are Lumenal-facing. The helical transmembrane segment at 157–177 (VLAAFEFIFHFSLASLVGIFV) threads the bilayer. Over 178 to 245 (GHVYYFFKFQ…WGRGMTLGRN (68 aa)) the chain is Cytoplasmic. A disordered region spans residues 218 to 245 (FGLPPESRAPPRQATESPWGRGMTLGRN).

Belongs to the derlin family.

It is found in the endoplasmic reticulum membrane. In terms of biological role, may be involved in the degradation process of specific misfolded endoplasmic reticulum (ER) luminal proteins. May also involved in endoplasmic reticulum stress-induced pre-emptive quality control, a mechanism that selectively attenuates the translocation of newly synthesized proteins into the endoplasmic reticulum and reroutes them to the cytosol for proteasomal degradation. In Drosophila melanogaster (Fruit fly), this protein is Derlin-1.